The sequence spans 526 residues: Cytochrome P450 4e2 (526 aa).

Positions 307 and 444 each coordinate heme.

Belongs to the cytochrome P450 family. Heme is required as a cofactor.

The protein resides in the endoplasmic reticulum membrane. The protein localises to the microsome membrane. May be involved in the metabolism of insect hormones and in the breakdown of synthetic insecticides. The polypeptide is Cytochrome P450 4e2 (Cyp4e2) (Drosophila melanogaster (Fruit fly)).